Here is a 356-residue protein sequence, read N- to C-terminus: MPKVLALETSCDESAAAVVQHSAGGLEVLAHRIASQVEEHAQWGGVVPEIASRRHVEALPHLISAVLDEAGLAVGEMDAVAATVTPGLVGALMVGSLTGRTLAALHHKPFLGVHHLEAHLASVRLASSPPEAPYVVLLVSGGHTELILVDSDSGLQRLGRSHDDAAGEAFDKVARLLGLAYPGGPAIQAAAKAGDPKRFSLPKGRVSRPEGGFYPYDFSFSGLKTAMLRQVESLKAQSDALPLEDLAASFEQIVVDVLVERSLRCCLDRGLSTLVMVGGVAANVRLRVQMEQQGRERGVSVHLAPLAYCTDNAAMVGAAALGRLQAGWGSSSIRLGVSARWPLEAGGDLYAQDPQF.

Fe cation is bound by residues histidine 115 and histidine 119. Substrate-binding positions include 138–142 (LVSGG), aspartate 171, glycine 184, and asparagine 283. A Fe cation-binding site is contributed by aspartate 311.

The protein belongs to the KAE1 / TsaD family. Fe(2+) is required as a cofactor.

It localises to the cytoplasm. It catalyses the reaction L-threonylcarbamoyladenylate + adenosine(37) in tRNA = N(6)-L-threonylcarbamoyladenosine(37) in tRNA + AMP + H(+). Its function is as follows. Required for the formation of a threonylcarbamoyl group on adenosine at position 37 (t(6)A37) in tRNAs that read codons beginning with adenine. Is involved in the transfer of the threonylcarbamoyl moiety of threonylcarbamoyl-AMP (TC-AMP) to the N6 group of A37, together with TsaE and TsaB. TsaD likely plays a direct catalytic role in this reaction. This Synechococcus sp. (strain WH7803) protein is tRNA N6-adenosine threonylcarbamoyltransferase.